Here is a 111-residue protein sequence, read N- to C-terminus: uncharacterized protein (111 aa).

This sequence to M.tuberculosis Rv1271c.

This is an uncharacterized protein from Mycobacterium bovis (strain ATCC BAA-935 / AF2122/97).